A 510-amino-acid polypeptide reads, in one-letter code: uncharacterized protein (510 aa).

Transmembrane regions (helical) follow at residues 17–37 (LKLG…LVVL), 56–76 (LIIH…ASVW), 111–131 (VLYI…ISPL), 148–168 (IVFI…AINI), 180–200 (LVNV…VCFG), 223–243 (LLFW…LIFI), 261–281 (FYLF…FGHI), 300–320 (YLGG…LVLM), 355–375 (IIKT…LIAI), 382–402 (LVIP…CMGY), 434–454 (AIYL…FSGI), and 472–492 (LLMG…LMFV).

It to A.aeolicus AQ_155.

Its subcellular location is the cell membrane. This is an uncharacterized protein from Rickettsia prowazekii (strain Madrid E).